A 323-amino-acid chain; its full sequence is NADH-cytochrome b5 reductase 2 (323 aa).

Residues 32–48 (LAPIYLGVGLIGLGVGL) traverse the membrane as a helical segment. The region spanning 72-177 (QGWVDLKLAQ…KGPIPKYPWE (106 aa)) is the FAD-binding FR-type domain. Residue 180–215 (KHKHICLIAGGTGITPMYQLARKIFKDPEDQTKVTL) participates in FAD binding.

This sequence belongs to the flavoprotein pyridine nucleotide cytochrome reductase family. FAD is required as a cofactor.

The protein resides in the mitochondrion outer membrane. The catalysed reaction is 2 Fe(III)-[cytochrome b5] + NADH = 2 Fe(II)-[cytochrome b5] + NAD(+) + H(+). Its function is as follows. May mediate the reduction of outer membrane cytochrome b5. The sequence is that of NADH-cytochrome b5 reductase 2 (mcr1) from Aspergillus fumigatus (strain ATCC MYA-4609 / CBS 101355 / FGSC A1100 / Af293) (Neosartorya fumigata).